The chain runs to 89 residues: Cell division topological specificity factor (89 aa).

The protein belongs to the MinE family.

Its function is as follows. Prevents the cell division inhibition by proteins MinC and MinD at internal division sites while permitting inhibition at polar sites. This ensures cell division at the proper site by restricting the formation of a division septum at the midpoint of the long axis of the cell. This is Cell division topological specificity factor from Heliobacterium modesticaldum (strain ATCC 51547 / Ice1).